The following is a 67-amino-acid chain: UPF0434 protein Bcep1808_2639 (67 aa).

The protein belongs to the UPF0434 family.

The chain is UPF0434 protein Bcep1808_2639 from Burkholderia vietnamiensis (strain G4 / LMG 22486) (Burkholderia cepacia (strain R1808)).